The sequence spans 386 residues: 1-deoxy-D-xylulose 5-phosphate reductoisomerase (386 aa).

Positions 10, 11, 12, 13, 36, 38, and 122 each coordinate NADPH. Residue Lys123 participates in 1-deoxy-D-xylulose 5-phosphate binding. Position 124 (Glu124) interacts with NADPH. A Mn(2+)-binding site is contributed by Asp148. Residues Ser149, Glu150, Ser174, and His197 each contribute to the 1-deoxy-D-xylulose 5-phosphate site. Glu150 is a Mn(2+) binding site. Gly203 lines the NADPH pocket. Residues Ser210, Asn215, Lys216, and Glu219 each contribute to the 1-deoxy-D-xylulose 5-phosphate site. Glu219 serves as a coordination point for Mn(2+).

This sequence belongs to the DXR family. The cofactor is Mg(2+). It depends on Mn(2+) as a cofactor.

The catalysed reaction is 2-C-methyl-D-erythritol 4-phosphate + NADP(+) = 1-deoxy-D-xylulose 5-phosphate + NADPH + H(+). Its pathway is isoprenoid biosynthesis; isopentenyl diphosphate biosynthesis via DXP pathway; isopentenyl diphosphate from 1-deoxy-D-xylulose 5-phosphate: step 1/6. Its function is as follows. Catalyzes the NADPH-dependent rearrangement and reduction of 1-deoxy-D-xylulose-5-phosphate (DXP) to 2-C-methyl-D-erythritol 4-phosphate (MEP). In Geobacter sulfurreducens (strain ATCC 51573 / DSM 12127 / PCA), this protein is 1-deoxy-D-xylulose 5-phosphate reductoisomerase.